A 211-amino-acid chain; its full sequence is Probable nicotinate-nucleotide adenylyltransferase (211 aa).

It belongs to the NadD family.

The enzyme catalyses nicotinate beta-D-ribonucleotide + ATP + H(+) = deamido-NAD(+) + diphosphate. Its pathway is cofactor biosynthesis; NAD(+) biosynthesis; deamido-NAD(+) from nicotinate D-ribonucleotide: step 1/1. In terms of biological role, catalyzes the reversible adenylation of nicotinate mononucleotide (NaMN) to nicotinic acid adenine dinucleotide (NaAD). The polypeptide is Probable nicotinate-nucleotide adenylyltransferase (Corynebacterium kroppenstedtii (strain DSM 44385 / JCM 11950 / CIP 105744 / CCUG 35717)).